A 221-amino-acid chain; its full sequence is Type 3 secretion system stator protein (221 aa).

It belongs to the SctL stator family. As to quaternary structure, the core secretion machinery of the T3SS is composed of approximately 20 different proteins, including cytoplasmic components, a base, an export apparatus and a needle. This subunit is part of the cytosolic complex. Interacts directly with YscN/SctN (T3SS ATPase) and YscQ/SctQ (the major sorting platform component).

The protein resides in the cytoplasm. In terms of biological role, component of the type III secretion system (T3SS), also called injectisome, which is used to inject bacterial effector proteins into eukaryotic host cells. Acts as a regulator of the YscN/SctN ATPase activity. This Yersinia pestis protein is Type 3 secretion system stator protein.